The following is a 475-amino-acid chain: MKIIQASVECAPFIKAGGLGDVVYSLSKALSIHHDVEILLPFYPLLFPAFSSQVLDEHVFAYNFLGRQNATATSYRYEGMTLTVITLDSQLELFSTSTIYTEDDTLRFSAFSAAAAAYIQKLDKVDVVHMHDWHVGLLAGLLKEPHLPSYPKRIFTIHNFSYRGYCSTQLLGASEISDFGLSNYQLFRDPSTSVLLKGALYCSDYITTVSPSYAQDILNDYSDYEIHDAIMSRRHVFCGILNGIDENIWNPETDPALAVRYGTHLLKSPDVLFTKKEENKIALYEKLGLSLEYSPLMCVISRIVEQKGPEFMKAAILHAMENSYALVIAGTCYDQETQRQFTNLQESLTTSPNIRIILDYNDPLVRLIYGAADMICIPSHFEPCGLTQLIGMRYGTVPLVRSTGGLADTVAAGVNGFTFSHTDNFNDFFHMLSQAVSTYRHEPDVWFQLVEEGMLRPSGLTTMAAHYLGVYNSLL.

Lys15 contributes to the ADP-alpha-D-glucose binding site.

Belongs to the glycosyltransferase 1 family. Bacterial/plant glycogen synthase subfamily.

It carries out the reaction [(1-&gt;4)-alpha-D-glucosyl](n) + ADP-alpha-D-glucose = [(1-&gt;4)-alpha-D-glucosyl](n+1) + ADP + H(+). It participates in glycan biosynthesis; glycogen biosynthesis. Synthesizes alpha-1,4-glucan chains using ADP-glucose. In Chlamydia abortus (strain DSM 27085 / S26/3) (Chlamydophila abortus), this protein is Glycogen synthase.